A 289-amino-acid polypeptide reads, in one-letter code: CRISPR-associated endoribonuclease Cas6 2 (289 aa).

The protein belongs to the CRISPR-associated endoribonuclease Cas6 family. In terms of assembly, possibly part of the aCascade ribonucleoprotein complex. Mg(2+) is required as a cofactor.

Functionally, CRISPR (clustered regularly interspaced short palindromic repeat) is an adaptive immune system that provides protection against mobile genetic elements (viruses, transposable elements and conjugative plasmids). CRISPR clusters contain sequences complementary to antecedent mobile elements and target invading nucleic acids. CRISPR clusters are transcribed and processed into CRISPR RNA (crRNA). Functions as a ssRNA-specific endoribonuclease, generating an 8 base-long tag known as the 5' handle. The chain is CRISPR-associated endoribonuclease Cas6 2 (cas6b) from Saccharolobus solfataricus (strain ATCC 35092 / DSM 1617 / JCM 11322 / P2) (Sulfolobus solfataricus).